The chain runs to 341 residues: tRNA N6-adenosine threonylcarbamoyltransferase (341 aa).

Residues histidine 111 and histidine 115 each coordinate Fe cation. Residues 134–138 (LVSGG), aspartate 167, glycine 180, and asparagine 276 each bind substrate. A Fe cation-binding site is contributed by aspartate 304.

This sequence belongs to the KAE1 / TsaD family. Fe(2+) is required as a cofactor.

It localises to the cytoplasm. The catalysed reaction is L-threonylcarbamoyladenylate + adenosine(37) in tRNA = N(6)-L-threonylcarbamoyladenosine(37) in tRNA + AMP + H(+). Functionally, required for the formation of a threonylcarbamoyl group on adenosine at position 37 (t(6)A37) in tRNAs that read codons beginning with adenine. Is involved in the transfer of the threonylcarbamoyl moiety of threonylcarbamoyl-AMP (TC-AMP) to the N6 group of A37, together with TsaE and TsaB. TsaD likely plays a direct catalytic role in this reaction. In Pseudomonas aeruginosa (strain LESB58), this protein is tRNA N6-adenosine threonylcarbamoyltransferase.